Here is a 774-residue protein sequence, read N- to C-terminus: 1,4-alpha-glucan branching enzyme GlgB 1 (774 aa).

The segment at 1–66 (MTPRPSSSGP…AEVAVSPAPD (66 aa)) is disordered. Residues 29 to 40 (KPAKAAKKKAPR) are compositionally biased toward basic residues. Over residues 41-55 (RTTASANASATTSVS) the composition is skewed to low complexity. Catalysis depends on D457, which acts as the Nucleophile. E510 acts as the Proton donor in catalysis. The interval 748 to 774 (YGGGDVVNPDPVKPEPQGGTAARRASG) is disordered.

It belongs to the glycosyl hydrolase 13 family. GlgB subfamily. Monomer.

The catalysed reaction is Transfers a segment of a (1-&gt;4)-alpha-D-glucan chain to a primary hydroxy group in a similar glucan chain.. It participates in glycan biosynthesis; glycogen biosynthesis. Its function is as follows. Catalyzes the formation of the alpha-1,6-glucosidic linkages in glycogen by scission of a 1,4-alpha-linked oligosaccharide from growing alpha-1,4-glucan chains and the subsequent attachment of the oligosaccharide to the alpha-1,6 position. The polypeptide is 1,4-alpha-glucan branching enzyme GlgB 1 (glgB1) (Streptomyces coelicolor (strain ATCC BAA-471 / A3(2) / M145)).